Reading from the N-terminus, the 259-residue chain is Putative cysteine-rich repeat secretory protein 25 (259 aa).

The N-terminal stretch at 1-31 (MSSSFLSRPLVSVYVFAMVTMQLLFMQSVLS) is a signal peptide. 2 consecutive Gnk2-homologous domains span residues 37–138 (AYLN…SIYT) and 144–256 (YRHI…LYPF).

This sequence belongs to the cysteine-rich repeat secretory protein family.

The protein resides in the secreted. This Arabidopsis thaliana (Mouse-ear cress) protein is Putative cysteine-rich repeat secretory protein 25 (CRRSP25).